The sequence spans 96 residues: Aspartyl/glutamyl-tRNA(Asn/Gln) amidotransferase subunit C (96 aa).

It belongs to the GatC family. As to quaternary structure, heterotrimer of A, B and C subunits.

The enzyme catalyses L-glutamyl-tRNA(Gln) + L-glutamine + ATP + H2O = L-glutaminyl-tRNA(Gln) + L-glutamate + ADP + phosphate + H(+). It carries out the reaction L-aspartyl-tRNA(Asn) + L-glutamine + ATP + H2O = L-asparaginyl-tRNA(Asn) + L-glutamate + ADP + phosphate + 2 H(+). Its function is as follows. Allows the formation of correctly charged Asn-tRNA(Asn) or Gln-tRNA(Gln) through the transamidation of misacylated Asp-tRNA(Asn) or Glu-tRNA(Gln) in organisms which lack either or both of asparaginyl-tRNA or glutaminyl-tRNA synthetases. The reaction takes place in the presence of glutamine and ATP through an activated phospho-Asp-tRNA(Asn) or phospho-Glu-tRNA(Gln). This chain is Aspartyl/glutamyl-tRNA(Asn/Gln) amidotransferase subunit C, found in Oceanobacillus iheyensis (strain DSM 14371 / CIP 107618 / JCM 11309 / KCTC 3954 / HTE831).